Here is a 497-residue protein sequence, read N- to C-terminus: mRNA cleavage and polyadenylation factor CLP1 (497 aa).

Residues 1-20 (MSIPGLGQIAPQQPTTSTTR) form a disordered region. Residues Glu29 and 168–173 (DSGKTT) contribute to the ATP site.

Belongs to the Clp1 family. Clp1 subfamily. In terms of assembly, component of a pre-mRNA cleavage factor complex. Interacts directly with PCF11.

The protein localises to the nucleus. Its function is as follows. Required for endonucleolytic cleavage during polyadenylation-dependent pre-mRNA 3'-end formation. This chain is mRNA cleavage and polyadenylation factor CLP1, found in Chaetomium globosum (strain ATCC 6205 / CBS 148.51 / DSM 1962 / NBRC 6347 / NRRL 1970) (Soil fungus).